Reading from the N-terminus, the 327-residue chain is PDZ and LIM domain protein 1 (327 aa).

Thr-2 is subject to N-acetylthreonine. The region spanning 3–85 (TQQIVLQGPG…NMTLTVSRSE (83 aa)) is the PDZ domain. Residues Ser-90 and Ser-130 each carry the phosphoserine modification. At Tyr-142 the chain carries Phosphotyrosine. A disordered region spans residues 161–186 (VESKTSASGEEANSRPSAQPHPSGGL). Residues 256-315 (PICDKCGTGIVGVFVKLRDHHRHPECYVCTDCGINLKQKGHFFVGDQIYCEKHARERVTP) form the LIM zinc-binding domain. 8 residues coordinate Zn(2+): Cys-258, Cys-261, His-278, Cys-281, Cys-284, Cys-287, Cys-305, and His-308. Phosphothreonine is present on Thr-314. Phosphotyrosine is present on Tyr-319.

Interacts with ACTN1. Interacts with ACTN2 and ACTN4. Interacts with PDLIM4. Expressed most abundantly in heart, lung and liver, moderately in spleen and skeletal muscle, and at extremely low levels (if at all) in testis and brain tissues.

It is found in the cytoplasm. Its subcellular location is the cytoskeleton. The protein localises to the myofibril. It localises to the sarcomere. The protein resides in the z line. Functionally, cytoskeletal protein that may act as an adapter that brings other proteins (like kinases) to the cytoskeleton. Involved in assembly, disassembly and directioning of stress fibers in fibroblasts. Required for the localization of ACTN1 and PALLD to stress fibers. Required for cell migration and in maintaining cell polarity of fibroblasts. The sequence is that of PDZ and LIM domain protein 1 (Pdlim1) from Rattus norvegicus (Rat).